The sequence spans 57 residues: Large ribosomal subunit protein bL32 (57 aa).

The protein belongs to the bacterial ribosomal protein bL32 family.

The polypeptide is Large ribosomal subunit protein bL32 (Halothermothrix orenii (strain H 168 / OCM 544 / DSM 9562)).